The primary structure comprises 116 residues: Protein Wnt-5a (116 aa).

Ser-1 carries O-palmitoleoyl serine; by PORCN lipidation. Residues Asn-69 and Asn-83 are each glycosylated (N-linked (GlcNAc...) asparagine). A disulfide bridge connects residues Cys-82 and Cys-97.

Belongs to the Wnt family. Palmitoleoylation is required for efficient binding to frizzled receptors. Depalmitoleoylation leads to Wnt signaling pathway inhibition.

Its subcellular location is the secreted. The protein resides in the extracellular space. It localises to the extracellular matrix. Functionally, ligand for members of the frizzled family of seven transmembrane receptors. Can activate or inhibit canonical Wnt signaling, depending on receptor context. Required during embryogenesis for extension of the primary anterior-posterior axis. This Meleagris gallopavo (Wild turkey) protein is Protein Wnt-5a (WNT5A).